A 384-amino-acid polypeptide reads, in one-letter code: Transcription factor TGA3 (384 aa).

Disordered regions lie at residues 36–70 and 76–95; these read KSDINNITSNQNNNQSSSTTLEVDARPEADDNNRV and YNNSLEAEPSSNNDQDEDRI. A compositionally biased stretch (low complexity) spans 39–55; that stretch reads INNITSNQNNNQSSSTT. A compositionally biased stretch (basic and acidic residues) spans 58 to 68; that stretch reads VDARPEADDNN. Over residues 76–88 the composition is skewed to polar residues; the sequence is YNNSLEAEPSSNN. Residues 96 to 138 enclose the bZIP domain; it reads NDKMKRRLAQNREAARKSRLRKKAHVQQLEESRLKLSQLEQEL. The interval 98–118 is basic motif; that stretch reads KMKRRLAQNREAARKSRLRKK. The Nuclear localization signal signature appears at 99 to 106; that stretch reads MKRRLAQN. Residues 117 to 144 adopt a coiled-coil conformation; that stretch reads KKAHVQQLEESRLKLSQLEQELVRARQQ. Residues 124 to 138 form a leucine-zipper region; sequence LEESRLKLSQLEQEL. The 213-residue stretch at 167–379 folds into the DOG1 domain; that stretch reads IAAFEMEYTH…RALSSLWAAR (213 aa). The hexadecanoate site is built by lysine 219, arginine 236, and phenylalanine 249. Positions 267 to 296 form a coiled coil; it reads DQQLLEVRNLQQSSQQAEEALSQGLDKLQQ.

The protein belongs to the bZIP family. As to quaternary structure, binds DNA as a dimer. Interacts with NPR3, NPR4 and sumoylated NPR1. Interacts with GRXC7/ROXY1. In terms of tissue distribution, expressed in the whole plant.

It is found in the nucleus. In terms of biological role, transcriptional activator that binds specifically to the DNA sequence 5'-TGACG-3'. Recognizes ocs elements like the as-1 motif of the cauliflower mosaic virus 35S promoter. Binding to the as-1-like cis elements mediate auxin- and salicylic acid-inducible transcription. Required to induce the systemic acquired resistance (SAR) via the regulation of pathogenesis-related genes expression. Binding to the as-1 element of PR-1 promoter is salicylic acid-inducible and mediated by sumoylated NPR1. Could also bind to the Hex-motif (5'-TGACGTGG-3') another cis-acting element found in plant histone promoters. This is Transcription factor TGA3 from Arabidopsis thaliana (Mouse-ear cress).